Reading from the N-terminus, the 705-residue chain is Phosphoribosylformylglycinamidine synthase subunit PurL (705 aa).

His-32 is an active-site residue. An ATP-binding site is contributed by Tyr-35. Glu-76 is a binding site for Mg(2+). Substrate-binding positions include 77 to 80 and Arg-99; that span reads SHNH. His-78 acts as the Proton acceptor in catalysis. Residue Asp-100 coordinates Mg(2+). A substrate-binding site is contributed by Gln-224. Mg(2+) is bound at residue Asp-252. 296 to 298 is a binding site for substrate; sequence ESQ. 2 residues coordinate ATP: Asp-471 and Gly-508. Asn-509 contacts Mg(2+). Position 511 (Ser-511) interacts with substrate.

Belongs to the FGAMS family. As to quaternary structure, monomer. Part of the FGAM synthase complex composed of 1 PurL, 1 PurQ and 2 PurS subunits.

It localises to the cytoplasm. The enzyme catalyses N(2)-formyl-N(1)-(5-phospho-beta-D-ribosyl)glycinamide + L-glutamine + ATP + H2O = 2-formamido-N(1)-(5-O-phospho-beta-D-ribosyl)acetamidine + L-glutamate + ADP + phosphate + H(+). Its pathway is purine metabolism; IMP biosynthesis via de novo pathway; 5-amino-1-(5-phospho-D-ribosyl)imidazole from N(2)-formyl-N(1)-(5-phospho-D-ribosyl)glycinamide: step 1/2. Its function is as follows. Part of the phosphoribosylformylglycinamidine synthase complex involved in the purines biosynthetic pathway. Catalyzes the ATP-dependent conversion of formylglycinamide ribonucleotide (FGAR) and glutamine to yield formylglycinamidine ribonucleotide (FGAM) and glutamate. The FGAM synthase complex is composed of three subunits. PurQ produces an ammonia molecule by converting glutamine to glutamate. PurL transfers the ammonia molecule to FGAR to form FGAM in an ATP-dependent manner. PurS interacts with PurQ and PurL and is thought to assist in the transfer of the ammonia molecule from PurQ to PurL. The polypeptide is Phosphoribosylformylglycinamidine synthase subunit PurL (Pyrococcus horikoshii (strain ATCC 700860 / DSM 12428 / JCM 9974 / NBRC 100139 / OT-3)).